Consider the following 1165-residue polypeptide: Leptin receptor (1165 aa).

An N-terminal signal peptide occupies residues 1–21 (MTCPKFSVALLHWEFIYVITA). Residues 22 to 838 (FDLAYPITPW…TQDGEKHRND (817 aa)) lie on the Extracellular side of the membrane. Intrachain disulfides connect Cys37–Cys90, Cys89–Cys99, Cys131–Cys142, Cys186–Cys196, and Cys188–Cys193. Asn41, Asn55, Asn72, Asn80, and Asn98 each carry an N-linked (GlcNAc...) asparagine glycan. The N-linked (GlcNAc...) asparagine glycan is linked to Asn187. N-linked (GlcNAc...) asparagine glycosylation is found at Asn206, Asn276, Asn347, and Asn397. The 94-residue stretch at 239 to 332 (PPLGLHMEIT…STPFTFTTQD (94 aa)) folds into the Fibronectin type-III 1 domain. 2 disulfide bridges follow: Cys352–Cys412 and Cys413–Cys418. N-linked (GlcNAc...) asparagine glycosylation is present at Asn433. Intrachain disulfides connect Cys436–Cys447, Cys473–Cys528, and Cys488–Cys498. The interval 467–484 (HRSSLYCSDVPSVHPISE) is leptin-binding. Fibronectin type-III domains follow at residues 539 to 634 (PPSS…TVVT), 642 to 736 (GPEF…WPMS), and 740 to 834 (IVQS…DGEK). The short motif at 622–626 (WSNWS) is the WSXWS motif element. N-linked (GlcNAc...) asparagine glycosylation is found at Asn624, Asn659, Asn670, Asn697, Asn728, and Asn750. Residues 839–861 (AGLYVIVPIIISSSILLLGTLLM) traverse the membrane as a helical segment. Residues 862-1165 (SHQRMKKLFW…MENKMYDLTV (304 aa)) lie on the Cytoplasmic side of the membrane. Residues 870 to 878 (FWEDVPNPK) carry the Box 1 motif motif. Residue Ser881 is modified to Phosphoserine. Residues 892 to 897 (ETFEHL) are required for JAK2 activation. Positions 897 to 905 (LFIKHTESV) are required for STAT3 phosphorylation. Tyr986 is subject to Phosphotyrosine; by JAK2. Tyr1079 is subject to Phosphotyrosine. Tyr1141 carries the phosphotyrosine; by JAK2 modification.

The protein belongs to the type I cytokine receptor family. Type 2 subfamily. In terms of assembly, present as a mixture of monomers and dimers. The phosphorylated receptor binds a number of SH2 domain-containing proteins such as JAK2, STAT3, PTPN11, and SOCS3. Interaction with SOCS3 inhibits JAK/STAT signaling and MAPK cascade. On ligand binding, phosphorylated on two conserved C-terminal tyrosine residues by JAK2. Tyr-986 is required for complete binding and activation of PTPN11, ERK/FOS activation,for interaction with SOCS3 and SOCS3 mediated inhibition of leptin signaling. Phosphorylation on Tyr-1141 is required for STAT3 binding/activation. Phosphorylation of Tyr-1079 has a more accessory role. In terms of tissue distribution, kidney, liver, spleen, lung, brain, testis, uterus, ovary, corpus luteum, theca and granulosa cells.

It localises to the cell membrane. Its subcellular location is the basolateral cell membrane. Its function is as follows. Receptor for hormone LEP/leptin. On ligand binding, mediates LEP central and peripheral effects through the activation of different signaling pathways such as JAK2/STAT3 and MAPK cascade/FOS. In the hypothalamus, LEP acts as an appetite-regulating factor that induces a decrease in food intake and an increase in energy consumption by inducing anorexinogenic factors and suppressing orexigenic neuropeptides, also regulates bone mass and secretion of hypothalamo-pituitary-adrenal hormones. In the periphery, increases basal metabolism, influences reproductive function, regulates pancreatic beta-cell function and insulin secretion, is pro-angiogenic and affects innate and adaptive immunity. Control of energy homeostasis and melanocortin production (stimulation of POMC and full repression of AgRP transcription) is mediated by STAT3 signaling, whereas distinct signals regulate NPY and the control of fertility, growth and glucose homeostasis. Involved in the regulation of counter-regulatory response to hypoglycemia by inhibiting neurons of the parabrachial nucleus. Has a specific effect on T lymphocyte responses, differentially regulating the proliferation of naive and memory T-cells. Leptin increases Th1 and suppresses Th2 cytokine production. The polypeptide is Leptin receptor (LEPR) (Sus scrofa (Pig)).